Reading from the N-terminus, the 158-residue chain is Endoribonuclease YbeY (158 aa).

Residues His119, His123, and His129 each coordinate Zn(2+).

This sequence belongs to the endoribonuclease YbeY family. Zn(2+) serves as cofactor.

It is found in the cytoplasm. Functionally, single strand-specific metallo-endoribonuclease involved in late-stage 70S ribosome quality control and in maturation of the 3' terminus of the 16S rRNA. This is Endoribonuclease YbeY from Shewanella sediminis (strain HAW-EB3).